We begin with the raw amino-acid sequence, 241 residues long: Leucyl/phenylalanyl-tRNA--protein transferase (241 aa).

The protein belongs to the L/F-transferase family.

It localises to the cytoplasm. The enzyme catalyses N-terminal L-lysyl-[protein] + L-leucyl-tRNA(Leu) = N-terminal L-leucyl-L-lysyl-[protein] + tRNA(Leu) + H(+). The catalysed reaction is N-terminal L-arginyl-[protein] + L-leucyl-tRNA(Leu) = N-terminal L-leucyl-L-arginyl-[protein] + tRNA(Leu) + H(+). It catalyses the reaction L-phenylalanyl-tRNA(Phe) + an N-terminal L-alpha-aminoacyl-[protein] = an N-terminal L-phenylalanyl-L-alpha-aminoacyl-[protein] + tRNA(Phe). Functionally, functions in the N-end rule pathway of protein degradation where it conjugates Leu, Phe and, less efficiently, Met from aminoacyl-tRNAs to the N-termini of proteins containing an N-terminal arginine or lysine. This chain is Leucyl/phenylalanyl-tRNA--protein transferase, found in Neisseria meningitidis serogroup A / serotype 4A (strain DSM 15465 / Z2491).